The following is a 459-amino-acid chain: Argininosuccinate lyase (459 aa).

Belongs to the lyase 1 family. Argininosuccinate lyase subfamily.

The protein localises to the cytoplasm. It carries out the reaction 2-(N(omega)-L-arginino)succinate = fumarate + L-arginine. Its pathway is amino-acid biosynthesis; L-arginine biosynthesis; L-arginine from L-ornithine and carbamoyl phosphate: step 3/3. This chain is Argininosuccinate lyase, found in Photorhabdus laumondii subsp. laumondii (strain DSM 15139 / CIP 105565 / TT01) (Photorhabdus luminescens subsp. laumondii).